The following is a 483-amino-acid chain: Trigger factor (483 aa).

The PPIase FKBP-type domain maps to 166–251 (TDTVNIDYVG…INDVFTKEKP (86 aa)). Residues 435-460 (GEEPKLSTTKKVVEPTEEKTRKDSKM) show a composition bias toward basic and acidic residues. Positions 435 to 483 (GEEPKLSTTKKVVEPTEEKTRKDSKMSTKKPAAKPAAKPAAATKKPVKK) are disordered. Over residues 467-483 (AKPAAKPAAATKKPVKK) the composition is skewed to low complexity.

This sequence belongs to the FKBP-type PPIase family. Tig subfamily.

It localises to the cytoplasm. The enzyme catalyses [protein]-peptidylproline (omega=180) = [protein]-peptidylproline (omega=0). Involved in protein export. Acts as a chaperone by maintaining the newly synthesized protein in an open conformation. Functions as a peptidyl-prolyl cis-trans isomerase. The sequence is that of Trigger factor from Mycoplasma mobile (strain ATCC 43663 / 163K / NCTC 11711) (Mesomycoplasma mobile).